We begin with the raw amino-acid sequence, 37 residues long: Large ribosomal subunit protein bL36c (37 aa).

This sequence belongs to the bacterial ribosomal protein bL36 family.

It localises to the plastid. The protein resides in the chloroplast. The protein is Large ribosomal subunit protein bL36c of Gnetum parvifolium (Small-leaved jointfir).